Reading from the N-terminus, the 264-residue chain is Sulfur carrier protein FdhD (264 aa).

The Cysteine persulfide intermediate role is filled by C107.

It belongs to the FdhD family.

The protein localises to the cytoplasm. Required for formate dehydrogenase (FDH) activity. Acts as a sulfur carrier protein that transfers sulfur from IscS to the molybdenum cofactor prior to its insertion into FDH. In Staphylococcus haemolyticus (strain JCSC1435), this protein is Sulfur carrier protein FdhD.